The chain runs to 49 residues: Defensin Tk-AMP-D1 (49 aa).

Cystine bridges form between C3-C49, C14-C34, C20-C43, and C24-C45.

In terms of biological role, has weak antifungal activity against F.graminearum and F.verticillioides below 30 ug/ml, but not against A.consortiale B.cinerea, H.sativum, F.culmorum, C.graminicola and D.maydis. This is Defensin Tk-AMP-D1 from Triticum kiharae (Wheat).